A 244-amino-acid polypeptide reads, in one-letter code: UPF0280 protein Mhun_0136 (244 aa).

Belongs to the UPF0280 family.

The chain is UPF0280 protein Mhun_0136 from Methanospirillum hungatei JF-1 (strain ATCC 27890 / DSM 864 / NBRC 100397 / JF-1).